The primary structure comprises 337 residues: F420-dependent glucose-6-phosphate dehydrogenase (337 aa).

D40 is a binding site for coenzyme F420-(gamma-Glu)n. H41 (proton donor) is an active-site residue. Residues T77 and 108–109 (TG) contribute to the coenzyme F420-(gamma-Glu)n site. E110 (proton acceptor) is an active-site residue. Coenzyme F420-(gamma-Glu)n is bound by residues N113, 178–179 (GG), and 181–182 (VV). Substrate-binding residues include T196, K199, K260, and R284.

This sequence belongs to the F420-dependent glucose-6-phosphate dehydrogenase family. In terms of assembly, homodimer.

The catalysed reaction is oxidized coenzyme F420-(gamma-L-Glu)(n) + D-glucose 6-phosphate + H(+) = 6-phospho-D-glucono-1,5-lactone + reduced coenzyme F420-(gamma-L-Glu)(n). Functionally, catalyzes the coenzyme F420-dependent oxidation of glucose 6-phosphate (G6P) to 6-phosphogluconolactone. The sequence is that of F420-dependent glucose-6-phosphate dehydrogenase from Rhodococcus hoagii (strain 103S) (Rhodococcus equi).